Consider the following 201-residue polypeptide: Retinol-binding protein 4 (201 aa).

A signal peptide spans 1 to 18; that stretch reads MEWVWALVVLAALGSAGA. Disulfide bonds link cysteine 22–cysteine 178, cysteine 88–cysteine 192, and cysteine 138–cysteine 147. Glutamine 116 provides a ligand contact to substrate. Arginine 139 is subject to Omega-N-methylarginine.

This sequence belongs to the calycin superfamily. Lipocalin family. In terms of assembly, interacts with TTR. Interaction with TTR prevents its loss by filtration through the kidney glomeruli. Interacts with STRA6.

It localises to the secreted. In terms of biological role, retinol-binding protein that mediates retinol transport in blood plasma. Delivers retinol from the liver stores to the peripheral tissues. Transfers the bound all-trans retinol to STRA6, that then facilitates retinol transport across the cell membrane. This chain is Retinol-binding protein 4 (RBP4), found in Equus caballus (Horse).